Reading from the N-terminus, the 373-residue chain is Cell surface Cu-only superoxide dismutase ARB_03674 (373 aa).

The first 55 residues, 1–55 (MIWKQPPRRMGEMGGSLSRRFGNAAASWAVWRVSRSCFSLLFFFYFFLFFSSSSL), serve as a signal peptide directing secretion. N-linked (GlcNAc...) asparagine glycosylation is found at asparagine 75 and asparagine 141. Cu cation contacts are provided by histidine 194, histidine 196, and histidine 212. A disulfide bond links cysteine 206 and cysteine 289. 2 N-linked (GlcNAc...) asparagine glycosylation sites follow: asparagine 254 and asparagine 274. Histidine 280 contacts Cu cation. Residues asparagine 283 and asparagine 291 are each glycosylated (N-linked (GlcNAc...) asparagine). Positions 329–348 (GHAPTISATYTPTPTPSPPA) are disordered. Over residues 331-340 (APTISATYTP) the composition is skewed to low complexity. Glycine 352 carries GPI-anchor amidated glycine lipidation. Positions 353 to 373 (AGRLVGFSLGAIMAALVPLAL) are cleaved as a propeptide — removed in mature form.

Belongs to the Cu-Zn superoxide dismutase family. Monomer. It depends on Cu cation as a cofactor. In terms of processing, the GPI-anchor is attached to the protein in the endoplasmic reticulum and serves to target the protein to the cell surface. There, the glucosamine-inositol phospholipid moiety is cleaved off and the GPI-modified mannoprotein is covalently attached via its lipidless GPI glycan remnant to the 1,6-beta-glucan of the outer cell wall layer.

It is found in the secreted. The protein resides in the cell wall. Its subcellular location is the cell membrane. The catalysed reaction is 2 superoxide + 2 H(+) = H2O2 + O2. Functionally, superoxide dismutases serve to convert damaging superoxide radicals, a key form of ROS, to less damaging hydrogen peroxide that can be converted into water by catalase action. Degrades host-derived reactive oxygen species to escape innate immune surveillance. Involved in the occurrence of miconazole-tolerant persisters in biofilms. Persisters are cells that survive high doses of an antimicrobial agent. The unusual attributes of SOD5-like fungal proteins, including the absence of zinc and an open active site that readily captures extracellular copper, make these SODs well suited to meet challenges in zinc and copper availability at the host-pathogen interface. This chain is Cell surface Cu-only superoxide dismutase ARB_03674, found in Arthroderma benhamiae (strain ATCC MYA-4681 / CBS 112371) (Trichophyton mentagrophytes).